Reading from the N-terminus, the 682-residue chain is Methionine--tRNA ligase (682 aa).

The 'HIGH' region signature appears at 15–25; the sequence is PYANGAIHLGH. Residues Cys-146, Cys-149, Cys-159, and Cys-162 each contribute to the Zn(2+) site. The short motif at 331-335 is the 'KMSKS' region element; that stretch reads KMSKS. Lys-334 is a binding site for ATP. Positions 580–682 constitute a tRNA-binding domain; it reads DFAKLDMRVA…SGVTAGMQVK (103 aa).

The protein belongs to the class-I aminoacyl-tRNA synthetase family. MetG type 1 subfamily. As to quaternary structure, homodimer. The cofactor is Zn(2+).

It is found in the cytoplasm. It carries out the reaction tRNA(Met) + L-methionine + ATP = L-methionyl-tRNA(Met) + AMP + diphosphate. Is required not only for elongation of protein synthesis but also for the initiation of all mRNA translation through initiator tRNA(fMet) aminoacylation. In Haemophilus influenzae (strain ATCC 51907 / DSM 11121 / KW20 / Rd), this protein is Methionine--tRNA ligase.